Here is a 403-residue protein sequence, read N- to C-terminus: MISQNIIKIIQKSNKRYFSSSNELKKTALNELHKELGAKMVPFCGWEMPVQYPAGVMKEHLHVRKESGLFDVSHMGQLRIHGKDRVKFFESIVVADLQALPTGHSKLSVFTNEKGGIIDDTMITNAGDSLYVVVNAGCADKDISHINEKIKEFKSVNPTHDVSMQLLEDLSLIAIQGPTTESILQKFVKDQDITNMEFMTQRPMTIAGIDCIVTRCGYTGEDGFEISVPSKQAVRLAELFLATSNASIESGIKPAGLGARDSLRLEAGLCLYGHDLNDDITPIEASLNWLISKRRREEGGFPGASIIQKQLQKDGCPQKRVGVIINGAPAREGCLILDPSTNQEIGKVTSGTISPITRQSISMAYVKTPFSKIGTQVNVSIRGKPITATISKMPFVPTNYKKL.

A mitochondrion-targeting transit peptide spans 1-25 (MISQNIIKIIQKSNKRYFSSSNELK). The substrate site is built by Glu-225, Arg-260, and Tyr-400.

The protein belongs to the GcvT family. In terms of assembly, the glycine cleavage system is composed of four proteins: P, T, L and H.

It localises to the mitochondrion. It catalyses the reaction N(6)-[(R)-S(8)-aminomethyldihydrolipoyl]-L-lysyl-[protein] + (6S)-5,6,7,8-tetrahydrofolate = N(6)-[(R)-dihydrolipoyl]-L-lysyl-[protein] + (6R)-5,10-methylene-5,6,7,8-tetrahydrofolate + NH4(+). The glycine cleavage system catalyzes the degradation of glycine. The polypeptide is Aminomethyltransferase, mitochondrial (gcvT) (Dictyostelium discoideum (Social amoeba)).